Reading from the N-terminus, the 286-residue chain is Shikimate dehydrogenase (NADP(+)) (286 aa).

Residues 19-21 and Thr66 contribute to the shikimate site; that span reads SVS. Lys70 acts as the Proton acceptor in catalysis. Residues Asn91 and Asp106 each contribute to the shikimate site. NADP(+) is bound by residues 130 to 134 and Ala225; that span reads GAGGS. Tyr227 contacts shikimate. An NADP(+)-binding site is contributed by Gly248.

Belongs to the shikimate dehydrogenase family. As to quaternary structure, homodimer.

The catalysed reaction is shikimate + NADP(+) = 3-dehydroshikimate + NADPH + H(+). It functions in the pathway metabolic intermediate biosynthesis; chorismate biosynthesis; chorismate from D-erythrose 4-phosphate and phosphoenolpyruvate: step 4/7. In terms of biological role, involved in the biosynthesis of the chorismate, which leads to the biosynthesis of aromatic amino acids. Catalyzes the reversible NADPH linked reduction of 3-dehydroshikimate (DHSA) to yield shikimate (SA). The sequence is that of Shikimate dehydrogenase (NADP(+)) from Dehalococcoides mccartyi (strain ATCC BAA-2266 / KCTC 15142 / 195) (Dehalococcoides ethenogenes (strain 195)).